A 145-amino-acid polypeptide reads, in one-letter code: D-aminoacyl-tRNA deacylase (145 aa).

Residues 137–138 (GP) carry the Gly-cisPro motif, important for rejection of L-amino acids motif.

It belongs to the DTD family. As to quaternary structure, homodimer.

It localises to the cytoplasm. The catalysed reaction is glycyl-tRNA(Ala) + H2O = tRNA(Ala) + glycine + H(+). It catalyses the reaction a D-aminoacyl-tRNA + H2O = a tRNA + a D-alpha-amino acid + H(+). Its function is as follows. An aminoacyl-tRNA editing enzyme that deacylates mischarged D-aminoacyl-tRNAs. Also deacylates mischarged glycyl-tRNA(Ala), protecting cells against glycine mischarging by AlaRS. Acts via tRNA-based rather than protein-based catalysis; rejects L-amino acids rather than detecting D-amino acids in the active site. By recycling D-aminoacyl-tRNA to D-amino acids and free tRNA molecules, this enzyme counteracts the toxicity associated with the formation of D-aminoacyl-tRNA entities in vivo and helps enforce protein L-homochirality. The sequence is that of D-aminoacyl-tRNA deacylase from Pseudomonas syringae pv. tomato (strain ATCC BAA-871 / DC3000).